The sequence spans 130 residues: Small ribosomal subunit protein bS6 (130 aa).

The segment at valine 96–glutamate 130 is disordered. Over residues lysine 104 to aspartate 118 the composition is skewed to basic and acidic residues. A compositionally biased stretch (acidic residues) spans arginine 119–glutamate 130.

It belongs to the bacterial ribosomal protein bS6 family.

In terms of biological role, binds together with bS18 to 16S ribosomal RNA. The sequence is that of Small ribosomal subunit protein bS6 from Shewanella denitrificans (strain OS217 / ATCC BAA-1090 / DSM 15013).